A 348-amino-acid polypeptide reads, in one-letter code: Elongation factor Ts (348 aa).

The segment at 82 to 85 (TDFV) is involved in Mg(2+) ion dislocation from EF-Tu.

This sequence belongs to the EF-Ts family.

It localises to the cytoplasm. In terms of biological role, associates with the EF-Tu.GDP complex and induces the exchange of GDP to GTP. It remains bound to the aminoacyl-tRNA.EF-Tu.GTP complex up to the GTP hydrolysis stage on the ribosome. This chain is Elongation factor Ts, found in Aliarcobacter butzleri (strain RM4018) (Arcobacter butzleri).